Here is a 307-residue protein sequence, read N- to C-terminus: tRNA-cytidine(32) 2-sulfurtransferase (307 aa).

Residues 44 to 49 (SGGKDS) carry the PP-loop motif motif. The [4Fe-4S] cluster site is built by C119, C122, and C210.

This sequence belongs to the TtcA family. Homodimer. It depends on Mg(2+) as a cofactor. [4Fe-4S] cluster is required as a cofactor.

It is found in the cytoplasm. The catalysed reaction is cytidine(32) in tRNA + S-sulfanyl-L-cysteinyl-[cysteine desulfurase] + AH2 + ATP = 2-thiocytidine(32) in tRNA + L-cysteinyl-[cysteine desulfurase] + A + AMP + diphosphate + H(+). The protein operates within tRNA modification. Catalyzes the ATP-dependent 2-thiolation of cytidine in position 32 of tRNA, to form 2-thiocytidine (s(2)C32). The sulfur atoms are provided by the cysteine/cysteine desulfurase (IscS) system. This is tRNA-cytidine(32) 2-sulfurtransferase from Aliivibrio fischeri (strain ATCC 700601 / ES114) (Vibrio fischeri).